Consider the following 889-residue polypeptide: MSEEPTTDMPTKYDPTAVEAGRYQTWLDQDLFKPSGDKKAKPYSIVIPPPNVTGKLHLGHAWDTTLQDIIIRQKRMQGFDTLWLPGMDHAGIATQAKVEAKLREQGISRYDLGREKFIQQVWDWKDEYASIIKQQWAKMGLSLDYSRERFTMDDGLSDAVKKVFVDLYNKGLIYRGEYIINWDPQARTALSDIEVIHKDDKGAFYHVKYPFADKDYTFNGKHYIEIATTRPETMMGDTAVAVNPSDDRYKELVGKKVILPLAEREIPIIADAYVDPEFGTGMVKITPAHDPNDFKVGNRHDLKRINTMNDDASMNANAGKYEGMDRFEARKAMVKDLEDQDLMIKIDPIVHSVGHSERTDVQVEARLSTQWFVKMKPLAEQALKNQEGDDAVDFIPKRFEDAFKQWMENIHDWVISRQLWWGHRIPAWYNKTTGETYVGVDGPKDPENWEQDPDVLDTWFSSALWPFSTMGWPNTDAEDFKRYFPTNTLVTGYDILPFWVSRMIFQSLEFTGRRPFKNVLLHGLIRDEHGVKMSKSLGNGIDPMDVIEKYGADALRWFLSNGSTAGQDVRFSYTKMDAAWNFINKIWNASRYVIMNLGTMDKPELPAASDWTLADKWILSRLNATVKQVTTTFDKFDFGEAGRALYNFIWNDFCDWYIEMSKEVLTGDDAQAKANTQNVLAYVLDQILRLLHPIMPFVTEKIWLSMPHVGESLVVAAYPVDHPEFDDETAESDMASLIELITAVRSIRAEANAKMSSAVDLLIKTDNTRLQAVFKANEDYIQRFAHPKTLSIGADVVAPKLAMTQVISDAEVYIPLAELVDLDEEVKKLEKEQAKFESEVARATKKLGNERFVANAPEDVVNSEKEKLADNQTKLAALKQRLVDIKAEA.

Residues Pro-50–His-60 carry the 'HIGH' region motif. Positions Lys-532–Ser-536 match the 'KMSKS' region motif. Lys-535 is an ATP binding site. Residues Leu-816–Ala-889 adopt a coiled-coil conformation.

It belongs to the class-I aminoacyl-tRNA synthetase family. ValS type 1 subfamily. In terms of assembly, monomer.

It is found in the cytoplasm. The enzyme catalyses tRNA(Val) + L-valine + ATP = L-valyl-tRNA(Val) + AMP + diphosphate. Its function is as follows. Catalyzes the attachment of valine to tRNA(Val). As ValRS can inadvertently accommodate and process structurally similar amino acids such as threonine, to avoid such errors, it has a 'posttransfer' editing activity that hydrolyzes mischarged Thr-tRNA(Val) in a tRNA-dependent manner. This Lactiplantibacillus plantarum (strain ATCC BAA-793 / NCIMB 8826 / WCFS1) (Lactobacillus plantarum) protein is Valine--tRNA ligase.